The chain runs to 61 residues: Sec-independent protein translocase protein TatA (61 aa).

The helical transmembrane segment at 2–22 threads the bilayer; that stretch reads GLSGISPLSLLLILAIIVALF.

This sequence belongs to the TatA/E family. The Tat system comprises two distinct complexes: a TatABC complex, containing multiple copies of TatA, TatB and TatC subunits, and a separate TatA complex, containing only TatA subunits. Substrates initially bind to the TatABC complex, which probably triggers association of the separate TatA complex to form the active translocon.

It is found in the cell inner membrane. Its function is as follows. Part of the twin-arginine translocation (Tat) system that transports large folded proteins containing a characteristic twin-arginine motif in their signal peptide across membranes. TatA could form the protein-conducting channel of the Tat system. This chain is Sec-independent protein translocase protein TatA, found in Legionella pneumophila (strain Corby).